We begin with the raw amino-acid sequence, 365 residues long: Patr class I histocompatibility antigen, A-108 alpha chain (365 aa).

An N-terminal signal peptide occupies residues 1 to 24; the sequence is MAVMPPRTLLLLLSGALALTQTWA. Residues 25 to 114 form an alpha-1 region; it reads GSHSMRYFYT…LRGYYNQSED (90 aa). The Extracellular segment spans residues 25 to 308; that stretch reads GSHSMRYFYT…EPSSQPTIPI (284 aa). The N-linked (GlcNAc...) asparagine glycan is linked to asparagine 110. Residues 115–206 are alpha-2; it reads GSHTIQIMYG…ENGKETLQRT (92 aa). Disulfide bonds link cysteine 125–cysteine 188 and cysteine 227–cysteine 283. Positions 207 to 298 are alpha-3; sequence DPPKTHMTHH…GLPKPLTLRW (92 aa). Residues 209-295 enclose the Ig-like C1-type domain; that stretch reads PKTHMTHHPI…QHEGLPKPLT (87 aa). Positions 299-308 are connecting peptide; the sequence is EPSSQPTIPI. A helical membrane pass occupies residues 309-332; it reads VGIIAGLVLLGAVITGAVVAAVMW. The Cytoplasmic segment spans residues 333–365; that stretch reads RRKSSDRKGGSYTQAASSDSAQGSDVSLTACKV. The tract at residues 339–360 is disordered; the sequence is RKGGSYTQAASSDSAQGSDVSL. At serine 343 the chain carries Phosphoserine. Tyrosine 344 carries the post-translational modification Phosphotyrosine. A compositionally biased stretch (low complexity) spans 346 to 359; the sequence is QAASSDSAQGSDVS. Serine 349, serine 350, serine 352, serine 356, and serine 359 each carry phosphoserine.

Belongs to the MHC class I family. As to quaternary structure, heterodimer of an alpha chain and a beta chain (beta-2-microglobulin).

The protein resides in the membrane. In terms of biological role, involved in the presentation of foreign antigens to the immune system. The polypeptide is Patr class I histocompatibility antigen, A-108 alpha chain (Patr-A) (Pan troglodytes (Chimpanzee)).